Consider the following 114-residue polypeptide: MTTKLERRLKIKAGVRGKISGTTERPRLTVFRSNKQIYAQVIDDTTGKTLAAASSLKLDVKAPKKEIAAKVGELIAKGAQEAGVQTVVFDRNGYLYHGRIKELADAARNGGLKF.

This sequence belongs to the universal ribosomal protein uL18 family. Part of the 50S ribosomal subunit; part of the 5S rRNA/L5/L18/L25 subcomplex. Contacts the 5S and 23S rRNAs.

This is one of the proteins that bind and probably mediate the attachment of the 5S RNA into the large ribosomal subunit, where it forms part of the central protuberance. The protein is Large ribosomal subunit protein uL18 of Parabacteroides distasonis (strain ATCC 8503 / DSM 20701 / CIP 104284 / JCM 5825 / NCTC 11152).